The sequence spans 81 residues: Defensin-like protein b (81 aa).

Positions 1–26 are cleaved as a signal peptide; that stretch reads MRNATFFIVFYVFISLVLSNVQDVTA. 4 disulfide bridges follow: Cys-31/Cys-81, Cys-42/Cys-66, Cys-50/Cys-76, and Cys-64/Cys-78.

Belongs to the DEFL family. Expressed in microspores and in young and mature anthers.

It localises to the secreted. Its function is as follows. Involved in self-incompatibility. The chain is Defensin-like protein b (SCRb-1) from Arabidopsis lyrata (Lyre-leaved rock-cress).